Reading from the N-terminus, the 687-residue chain is uncharacterized protein (687 aa).

A run of 14 helical transmembrane segments spans residues 28–48 (IIFTALVFGVLVAATGQTIVV), 66–86 (WAVTSYLLGGTVVVVVAGKLG), 94–114 (VLLGSVVVFVVGSVLCGLSQT), 126–146 (GVGAGAISVTAYALAAEVVPL), 154–174 (GVLGAVFGVNTVTGPLLGGWL), 182–202 (WAFWINVPVSIAVLTVAATAV), 211–231 (PVIDYLGILVIAVATTALIMA), 243–263 (SATIVGLLIGAAVALGFFVWL), 287–307 (VLSFVVGFAMLGALTFVPIYL), 320–340 (LRTLPMVIGLLIASTGTGVLV), 348–368 (IFPVAGMALMAVAFLLMSQMD), 378–398 (LYLVVLGAGIGLSMQVLVLIV), 414–434 (VTFFRVVGASFGTATFGALFV), and 480–500 (LTQVFLCAVSVTVVGFILALL).

Belongs to the major facilitator superfamily. TCR/Tet family.

Its subcellular location is the cell membrane. This is an uncharacterized protein from Mycobacterium tuberculosis (strain CDC 1551 / Oshkosh).